Consider the following 259-residue polypeptide: Phosphate import ATP-binding protein PstB (259 aa).

The 249-residue stretch at 6-254 (SKNESVVFDV…PKDKRTEDYI (249 aa)) folds into the ABC transporter domain. An ATP-binding site is contributed by 45 to 52 (GPSGCGKS).

It belongs to the ABC transporter superfamily. Phosphate importer (TC 3.A.1.7) family. The complex is composed of two ATP-binding proteins (PstB), two transmembrane proteins (PstC and PstA) and a solute-binding protein (PstS).

It localises to the cell membrane. It catalyses the reaction phosphate(out) + ATP + H2O = ADP + 2 phosphate(in) + H(+). In terms of biological role, part of the ABC transporter complex PstSACB involved in phosphate import. Responsible for energy coupling to the transport system. The chain is Phosphate import ATP-binding protein PstB from Desulfitobacterium hafniense (strain Y51).